The primary structure comprises 180 residues: Nucleoplasmin-3 (180 aa).

Position 2 is an N-acetylalanine (Ala2). Ser13 and Ser16 each carry phosphoserine. Arg27 is subject to Omega-N-methylarginine. The interval 141–180 (TMSNDVSEEESEEEEEEEDSDEEEAELCPILPAKKQGGRP) is disordered. The segment covering 146 to 166 (VSEEESEEEEEEEDSDEEEAE) has biased composition (acidic residues). Phosphoserine occurs at positions 147, 151, and 160.

This sequence belongs to the nucleoplasmin family. As to quaternary structure, interacts with NPM (via N-terminus). Forms a pentamer with NPM at a ratio 4:1 (NPM3/NPM). Two pentamers form a decamer. Post-translationally, phosphorylated.

Its subcellular location is the nucleus. It localises to the nucleolus. Its function is as follows. Plays a role in the regulation of diverse cellular processes such as ribosome biogenesis, chromatin remodeling or protein chaperoning. Modulates the histone chaperone function and the RNA-binding activity of nucleolar phosphoprotein B23/NPM. Efficiently mediates chromatin remodeling when included in a pentamer containing NPM3 and NPM. The polypeptide is Nucleoplasmin-3 (NPM3) (Pongo abelii (Sumatran orangutan)).